A 177-amino-acid polypeptide reads, in one-letter code: tRNA-splicing endonuclease (177 aa).

Residues Tyr-114, His-123, and Lys-154 contribute to the active site.

This sequence belongs to the tRNA-intron endonuclease family. Archaeal short subfamily. As to quaternary structure, homotetramer; although the tetramer contains four active sites, only two participate in the cleavage. Therefore, it should be considered as a dimer of dimers.

It carries out the reaction pretRNA = a 3'-half-tRNA molecule with a 5'-OH end + a 5'-half-tRNA molecule with a 2',3'-cyclic phosphate end + an intron with a 2',3'-cyclic phosphate and a 5'-hydroxyl terminus.. Functionally, endonuclease that removes tRNA introns. Cleaves pre-tRNA at the 5'- and 3'-splice sites to release the intron. The products are an intron and two tRNA half-molecules bearing 2',3' cyclic phosphate and 5'-OH termini. Recognizes a pseudosymmetric substrate in which 2 bulged loops of 3 bases are separated by a stem of 4 bp. The chain is tRNA-splicing endonuclease from Methanococcus vannielii (strain ATCC 35089 / DSM 1224 / JCM 13029 / OCM 148 / SB).